The primary structure comprises 208 residues: Heat shock protein 26 (208 aa).

Phosphoserine is present on residues S44, S52, and S58. A sHSP domain is found at 71-179 (ANRNDIHWPA…KSKERIIQIQ (109 aa)). Positions 187–208 (NVKANESEVKGKENGAPNGKDK) are disordered. Over residues 191–208 (NESEVKGKENGAPNGKDK) the composition is skewed to basic and acidic residues.

This sequence belongs to the small heat shock protein (HSP20) family.

The protein is Heat shock protein 26 (Hsp26) of Drosophila melanogaster (Fruit fly).